The sequence spans 611 residues: Probable Xaa-Pro aminopeptidase P (611 aa).

Mn(2+) contacts are provided by Asp-408, Asp-419, Glu-517, and Glu-531.

This sequence belongs to the peptidase M24B family. The cofactor is Mn(2+).

The enzyme catalyses Release of any N-terminal amino acid, including proline, that is linked to proline, even from a dipeptide or tripeptide.. Catalyzes the removal of a penultimate prolyl residue from the N-termini of peptides. The polypeptide is Probable Xaa-Pro aminopeptidase P (AMPP) (Coccidioides posadasii (strain RMSCC 757 / Silveira) (Valley fever fungus)).